The sequence spans 890 residues: Alanine--tRNA ligase (890 aa).

Positions 567, 571, 680, and 684 each coordinate Zn(2+).

The protein belongs to the class-II aminoacyl-tRNA synthetase family. The cofactor is Zn(2+).

Its subcellular location is the cytoplasm. It catalyses the reaction tRNA(Ala) + L-alanine + ATP = L-alanyl-tRNA(Ala) + AMP + diphosphate. Its function is as follows. Catalyzes the attachment of alanine to tRNA(Ala) in a two-step reaction: alanine is first activated by ATP to form Ala-AMP and then transferred to the acceptor end of tRNA(Ala). Also edits incorrectly charged Ser-tRNA(Ala) and Gly-tRNA(Ala) via its editing domain. The protein is Alanine--tRNA ligase of Ruegeria pomeroyi (strain ATCC 700808 / DSM 15171 / DSS-3) (Silicibacter pomeroyi).